The chain runs to 137 residues: MIWKRHLTLDELNATSQNTLVAHLGIVYTRLGDDVLEAEMPVDARTHQPFGLLHGGASAALAETLGSMAGYLMTRDGQCVVGTELNATHHRAISQGKVRGVCLPLHLGRQNQSWEITLFDEQGRRCCTCRLGTAVMG.

The active-site Nucleophile or proton acceptor is the glutamate 63.

It belongs to the thioesterase PaaI family. In terms of assembly, homotetramer. Dimer of dimers. Interacts specifically with the aryl carrier protein (ArCP) domain of EntB.

It localises to the cytoplasm. Its pathway is siderophore biosynthesis; enterobactin biosynthesis. Its function is as follows. Required for optimal enterobactin synthesis. Acts as a proofreading enzyme that prevents EntB misacylation by hydrolyzing the thioester bound existing between EntB and wrongly charged molecules. In Salmonella typhimurium (strain LT2 / SGSC1412 / ATCC 700720), this protein is Proofreading thioesterase EntH.